The primary structure comprises 728 residues: UvrABC system protein C (728 aa).

The GIY-YIG domain maps to 16 to 95; sequence DSPGVYRFRD…IKEYDPRFNV (80 aa). One can recognise a UVR domain in the interval 208–243; sequence GTYLRRLERQMAEAAEEMEYERAARLRDDIGALKKA. 2 disordered regions span residues 473 to 535 and 689 to 728; these read ADGE…GRPK and VNTA…GQER. Residues 487–505 are compositionally biased toward low complexity; it reads GDAAPNGDAAPNDGAAPDD.

It belongs to the UvrC family. As to quaternary structure, interacts with UvrB in an incision complex.

The protein localises to the cytoplasm. Functionally, the UvrABC repair system catalyzes the recognition and processing of DNA lesions. UvrC both incises the 5' and 3' sides of the lesion. The N-terminal half is responsible for the 3' incision and the C-terminal half is responsible for the 5' incision. This Streptomyces coelicolor (strain ATCC BAA-471 / A3(2) / M145) protein is UvrABC system protein C.